The following is a 345-amino-acid chain: Tryptophan--tRNA ligase (345 aa).

Residues 12 to 14 (RPT) and 20 to 21 (GH) contribute to the ATP site. The 'HIGH' region signature appears at 13 to 21 (PTGKLHLGH). An L-tryptophan-binding site is contributed by Asp144. Residues 156–158 (GKD), Leu194, and 202–206 (KMSKS) each bind ATP. The short motif at 202–206 (KMSKS) is the 'KMSKS' region element.

It belongs to the class-I aminoacyl-tRNA synthetase family. Homodimer.

It is found in the cytoplasm. The catalysed reaction is tRNA(Trp) + L-tryptophan + ATP = L-tryptophyl-tRNA(Trp) + AMP + diphosphate + H(+). Its function is as follows. Catalyzes the attachment of tryptophan to tRNA(Trp). The chain is Tryptophan--tRNA ligase from Chlamydia caviae (strain ATCC VR-813 / DSM 19441 / 03DC25 / GPIC) (Chlamydophila caviae).